The sequence spans 475 residues: Phosphoethanolamine N-methyltransferase 1 (475 aa).

This sequence belongs to the class I-like SAM-binding methyltransferase superfamily.

The enzyme catalyses phosphoethanolamine + S-adenosyl-L-methionine = N-methylethanolamine phosphate + S-adenosyl-L-homocysteine + H(+). It participates in phospholipid metabolism; phosphatidylcholine biosynthesis; phosphocholine from phosphoethanolamine. Feedback inhibition by phosphatidylcholine. In terms of biological role, catalyzes the first step in the synthesis of phosphocholine by converting phosphoethanolamine into phospho-monomethylethanolamine (N-methylethanolamine phosphate). Phosphocholine is a precursor for phosphatidylcholine, a major component in membranes and a precursor itself in the production of glycoconjugates secreted by parasitic nematodes to avoid host immune responses. The protein is Phosphoethanolamine N-methyltransferase 1 of Caenorhabditis elegans.